Consider the following 67-residue polypeptide: Potassium channel toxin alpha-KTx (67 aa).

The first 25 residues, 1–25 (MKNIAMKTTVVLTILLLSVLTAINA), serve as a signal peptide directing secretion. A propeptide spanning residues 26 to 31 (DTMKKR) is cleaved from the precursor. Cystine bridges form between Cys35/Cys54, Cys40/Cys59, Cys44/Cys61, and Cys49/Cys64.

This sequence belongs to the short scorpion toxin superfamily. Potassium channel inhibitor family. In terms of tissue distribution, expressed by the venom gland.

The protein localises to the secreted. Its function is as follows. Blocks Kv1.1/KCNA1, Kv1.2/KCNA2 and Kv1.3/KCNA3 voltage-gated potassium channels. The sequence is that of Potassium channel toxin alpha-KTx from Hoffmannihadrurus gertschi (Scorpion).